The sequence spans 159 residues: Ribosomal RNA large subunit methyltransferase H (159 aa).

Residues leucine 76, glycine 107, and 126-131 contribute to the S-adenosyl-L-methionine site; that span reads ISSLTL.

This sequence belongs to the RNA methyltransferase RlmH family. In terms of assembly, homodimer.

The protein localises to the cytoplasm. It carries out the reaction pseudouridine(1915) in 23S rRNA + S-adenosyl-L-methionine = N(3)-methylpseudouridine(1915) in 23S rRNA + S-adenosyl-L-homocysteine + H(+). Its function is as follows. Specifically methylates the pseudouridine at position 1915 (m3Psi1915) in 23S rRNA. The protein is Ribosomal RNA large subunit methyltransferase H of Cupriavidus metallidurans (strain ATCC 43123 / DSM 2839 / NBRC 102507 / CH34) (Ralstonia metallidurans).